The following is a 122-amino-acid chain: Heat-labile enterotoxin IIB, B chain (122 aa).

The first 23 residues, 1–23 (MSFKKIIKAFVIMAALVSVQAHA), serve as a signal peptide directing secretion. C33 and C104 are oxidised to a cystine.

Heterohexamer of one A chain and of five B chains.

Functionally, the biological activity of the toxin is produced by the A chain, which activates intracellular adenyl cyclase. This is Heat-labile enterotoxin IIB, B chain from Escherichia coli.